Consider the following 1173-residue polypeptide: WASH complex subunit 4 (1173 aa).

Position 2 is an N-acetylalanine (Ala2). A Phosphoserine modification is found at Ser7. Positions 27–56 (QLKNYGRFLEEYTSQLRRIEDALDDLIGDV) form a coiled coil. Residues 705-1173 (KDLALFFSLN…STVSADPVVK (469 aa)) form a sufficient for interaction with WASHC5 region. The segment covering 1141-1155 (AEENQEKKEKEEETK) has biased composition (basic and acidic residues). The tract at residues 1141–1173 (AEENQEKKEKEEETKTSNGDGPESTVSADPVVK) is disordered. Thr1154 carries the phosphothreonine modification.

Belongs to the SWIP family. In terms of assembly, component of the WASH core complex also described as WASH regulatory complex (SHRC) composed of WASH (WASHC1, WASH2P or WASH3P), WASHC2 (WASHC2A or WASHC2C), WASHC3, WASHC4 and WASHC5. The WASH core complex associates via WASHC2 with the F-actin-capping protein dimer (formed by CAPZA1, CAPZA2 or CAPZA3 and CAPZB) in a transient or substoichiometric manner which was initially described as WASH complex.

Its subcellular location is the early endosome. Acts as a component of the WASH core complex that functions as a nucleation-promoting factor (NPF) at the surface of endosomes, where it recruits and activates the Arp2/3 complex to induce actin polymerization, playing a key role in the fission of tubules that serve as transport intermediates during endosome sorting. This chain is WASH complex subunit 4, found in Mus musculus (Mouse).